The following is a 417-amino-acid chain: NADH-dependent phenylglyoxylate dehydrogenase subunit alpha (417 aa).

As to quaternary structure, dimer of heteropentamers composed of an alpha (PadG), a beta (PadI), a gamma (PadE), a delta (PadF) and an epsilon (PadH) subunit.

The enzyme catalyses phenylglyoxylate + NAD(+) + CoA = benzoyl-CoA + CO2 + NADH. With respect to regulation, activated by magnesium ions and thiamine diphosphate. In terms of biological role, involved in the anaerobic metabolism of phenylalanine and phenylacetate. Catalyzes the oxidative decarboxylation of phenylglyoxylate to benzoyl-CoA and CO(2). It can also react slowly with 2-oxo-3-methylbutanoate and use different electron acceptors such as benzyl viologen, methyl viologen, FAD or FMN, but NAD seems to be the physiological electron acceptor. Also catalyzes an isotope exchange between CO(2) and the carboxyl group which proves partial or complete reversibility of the oxidative decarboxylation reaction. This is NADH-dependent phenylglyoxylate dehydrogenase subunit alpha (padG) from Aromatoleum evansii (Azoarcus evansii).